A 166-amino-acid polypeptide reads, in one-letter code: Transcriptional repressor NrdR (166 aa).

Residues 3–34 fold into a zinc finger; that stretch reads CPFCRNPDSRVVDSRMADDGSSIRRRRQCPEC. Residues 46 to 136 enclose the ATP-cone domain; the sequence is LSVIKRSGVG…VYQAFESLED (91 aa).

This sequence belongs to the NrdR family. The cofactor is Zn(2+).

Its function is as follows. Negatively regulates transcription of bacterial ribonucleotide reductase nrd genes and operons by binding to NrdR-boxes. The chain is Transcriptional repressor NrdR from Paenarthrobacter aurescens (strain TC1).